The primary structure comprises 213 residues: Uridine kinase (213 aa).

15–22 lines the ATP pocket; that stretch reads GASASGKS.

It belongs to the uridine kinase family.

It is found in the cytoplasm. It carries out the reaction uridine + ATP = UMP + ADP + H(+). The enzyme catalyses cytidine + ATP = CMP + ADP + H(+). It functions in the pathway pyrimidine metabolism; CTP biosynthesis via salvage pathway; CTP from cytidine: step 1/3. It participates in pyrimidine metabolism; UMP biosynthesis via salvage pathway; UMP from uridine: step 1/1. This Pectobacterium carotovorum subsp. carotovorum (strain PC1) protein is Uridine kinase.